Here is a 145-residue protein sequence, read N- to C-terminus: Peptide methionine sulfoxide reductase MsrB (145 aa).

The MsrB domain occupies 6–129 (KNERLQQLTD…NSAALRFIPV (124 aa)). The Nucleophile role is filled by Cys-118.

It belongs to the MsrB Met sulfoxide reductase family.

It carries out the reaction L-methionyl-[protein] + [thioredoxin]-disulfide + H2O = L-methionyl-(R)-S-oxide-[protein] + [thioredoxin]-dithiol. The chain is Peptide methionine sulfoxide reductase MsrB from Listeria monocytogenes serotype 4a (strain HCC23).